Here is a 282-residue protein sequence, read N- to C-terminus: MIEQRPVSNLIGHLILILGIIIVAFPIYYTFVASLMTSTQIIRPPISLLPGDHLVENYREAIFGGVERVVGVSLERLLWNSFVVAMAIAVGKIIISFMSAFAIVFFRFPMRMFFFWMIFITLMLPVEVRILPTYKVIVDLGMIDTYAGLTLPLMASATATFLFRQFFLTIPGELVEAARIDNAGPFRFMRDILLPLSKTNIAALFVILSIYGWTQYLWPLLVTNDAKMNTIIIGLRRMVDWADASTSWNYVMVTAILAIIPPILVVVLMQRWFVKGLVETEK.

The next 6 membrane-spanning stretches (helical) occupy residues 14-34 (LILILGIIIVAFPIYYTFVAS), 86-106 (MAIAVGKIIISFMSAFAIVFF), 112-132 (MFFFWMIFITLMLPVEVRILP), 146-168 (YAGLTLPLMASATATFLFRQFFL), 201-221 (IAALFVILSIYGWTQYLWPLL), and 248-268 (WNYVMVTAILAIIPPILVVVL). The 192-residue stretch at 78 to 269 (LWNSFVVAMA…IPPILVVVLM (192 aa)) folds into the ABC transmembrane type-1 domain.

Belongs to the binding-protein-dependent transport system permease family. As to quaternary structure, the complex is composed of two ATP-binding proteins (UgpC), two transmembrane proteins (UgpA and UgpE) and a solute-binding protein (UgpB).

It localises to the cell inner membrane. Functionally, part of the ABC transporter complex UgpBAEC involved in sn-glycerol-3-phosphate (G3P) import. Probably responsible for the translocation of the substrate across the membrane. This is sn-glycerol-3-phosphate transport system permease protein UgpE (ugpE) from Brucella suis biovar 1 (strain 1330).